The following is a 336-amino-acid chain: Eukaryotic translation initiation factor 3 subunit I (336 aa).

5 WD repeats span residues 8-47, 50-91, 146-185, 190-229, and 287-326; these read GHER…RLGT, GHLG…KVWE, CTES…QLEN, EFDH…ILKT, and GHFG…FDFM.

It belongs to the eIF-3 subunit I family. As to quaternary structure, component of the eukaryotic translation initiation factor 3 (eIF-3) complex.

The protein localises to the cytoplasm. Functionally, component of the eukaryotic translation initiation factor 3 (eIF-3) complex, which is involved in protein synthesis of a specialized repertoire of mRNAs and, together with other initiation factors, stimulates binding of mRNA and methionyl-tRNAi to the 40S ribosome. The eIF-3 complex specifically targets and initiates translation of a subset of mRNAs involved in cell proliferation. The polypeptide is Eukaryotic translation initiation factor 3 subunit I (tif34) (Emericella nidulans (strain FGSC A4 / ATCC 38163 / CBS 112.46 / NRRL 194 / M139) (Aspergillus nidulans)).